The following is a 200-amino-acid chain: Dephospho-CoA kinase (200 aa).

The DPCK domain occupies 3-200 (VLGLTGSIGM…LSGKPAAATR (198 aa)). Residue 11-16 (GMGKTT) participates in ATP binding.

It belongs to the CoaE family.

Its subcellular location is the cytoplasm. The enzyme catalyses 3'-dephospho-CoA + ATP = ADP + CoA + H(+). It functions in the pathway cofactor biosynthesis; coenzyme A biosynthesis; CoA from (R)-pantothenate: step 5/5. Catalyzes the phosphorylation of the 3'-hydroxyl group of dephosphocoenzyme A to form coenzyme A. This chain is Dephospho-CoA kinase, found in Brucella melitensis biotype 1 (strain ATCC 23456 / CCUG 17765 / NCTC 10094 / 16M).